The sequence spans 519 residues: MSGVELQPESTQSEEKEEPKTAATTISSTEETKTENPNVALDNLAKTPIQLILQPTPQTPAKTPETPRIQKINNLKKSASFDSKNQPEDSKTPKQRDQLIEVPSDEVGRVENNIDNLPFYHGFMGRTECESMLSNHGDFLIRMTEVGRRVAYVISVRWHYQNSHVLVKRTKTKKLYWTKKYAFKSICELIAYHKLNQIPFYDNMTLICGLARHEWQLNNEQVTLNKKLGEGQFGEVHKGKLKTSVFTPPVIVAVKTLHQNHLSANEKILFLKEANVMLTLAHPNVIKFYGVCTMKEPIMIVMEFCDGSSLEDVLLSKESKVSSEDKILYLFHAACGIDYLHGKHVIHRDIAARNCLLNSKKVLKISDFGLSVKGVAIKERKGGCLPVKYMAPETLKKGFYSTASDIYSYGALVYEVYTDGKTPFESCGLRGNELRKAIIGKSVILTIDVECPEFVKAIFEQSRLYDTEQRISSKRIIEIFKEEAGMHELDATGLFGRIGSFFSRVRRQKEAEPSVPILT.

2 disordered regions span residues 1 to 39 (MSGV…NPNV) and 73 to 97 (NNLK…KQRD). A compositionally biased stretch (polar residues) spans 73-84 (NNLKKSASFDSK). Basic and acidic residues predominate over residues 85–97 (NQPEDSKTPKQRD). Residues 119 to 208 (FYHGFMGRTE…PFYDNMTLIC (90 aa)) form the SH2 domain. ATP is bound by residues 146–154 (VGRRVAYVI) and lysine 184. Positions 209–490 (GLARHEWQLN…KEEAGMHELD (282 aa)) constitute a Protein kinase domain. Catalysis depends on aspartate 349, which acts as the Proton acceptor.

The protein belongs to the protein kinase superfamily. Tyr protein kinase family. Fes/fps subfamily. As to expression, expressed in hermaphrodite larvae but not in adult. Expressed in both male larvae and adult.

The protein resides in the cell membrane. The protein localises to the cytoplasm. It catalyses the reaction L-tyrosyl-[protein] + ATP = O-phospho-L-tyrosyl-[protein] + ADP + H(+). In terms of biological role, probable non-receptor tyrosine-protein kinase which plays a role in spermatid activation (spermiogenesis) in hermaphrodites. The protein is Spermatocyte protein spe-8 of Caenorhabditis briggsae.